We begin with the raw amino-acid sequence, 462 residues long: Cell wall mannoprotein 1 (462 aa).

Positions 1–18 (MKFLSSLVVLGLSAQALA) are cleaved as a signal peptide. Ser313 lines the hexadecanoate pocket. Residues 346-429 (FAGTGPAPTT…SVPAAPTGGN (84 aa)) form a disordered region. Low complexity predominate over residues 347–366 (AGTGPAPTTSSTPEASTAPA). The span at 399–420 (VWPTSTTASPDVQPTITSSGTS) shows a compositional bias: polar residues.

This sequence belongs to the cell wall mannoprotein 1 family. In terms of assembly, monomer. Post-translationally, mannoprotein, glycosylated.

Its subcellular location is the secreted. The protein localises to the cell wall. Its function is as follows. Constitutive protein of the cell wall. Binds fatty acids and may thus serve as a fatty acid transporter between P.marneffei and host cells during infection. Abundant antigen target of host humoral immune response. In Talaromyces marneffei (Penicillium marneffei), this protein is Cell wall mannoprotein 1.